Here is a 537-residue protein sequence, read N- to C-terminus: Chaperonin GroEL (537 aa).

Residues 29-32 (TLGP), 86-90 (DGTTT), G413, 477-479 (NAA), and D493 contribute to the ATP site.

The protein belongs to the chaperonin (HSP60) family. In terms of assembly, forms a cylinder of 14 subunits composed of two heptameric rings stacked back-to-back. Interacts with the co-chaperonin GroES.

It localises to the cytoplasm. It carries out the reaction ATP + H2O + a folded polypeptide = ADP + phosphate + an unfolded polypeptide.. In terms of biological role, together with its co-chaperonin GroES, plays an essential role in assisting protein folding. The GroEL-GroES system forms a nano-cage that allows encapsulation of the non-native substrate proteins and provides a physical environment optimized to promote and accelerate protein folding. This Lactobacillus delbrueckii subsp. bulgaricus (strain ATCC 11842 / DSM 20081 / BCRC 10696 / JCM 1002 / NBRC 13953 / NCIMB 11778 / NCTC 12712 / WDCM 00102 / Lb 14) protein is Chaperonin GroEL.